An 84-amino-acid chain; its full sequence is Acyl carrier protein MbtL (84 aa).

In terms of domain architecture, Carrier spans 6–81; it reads STVSTTLLSI…ELEAAIAAKY (76 aa). Ser41 is modified (O-(pantetheine 4'-phosphoryl)serine).

In terms of processing, 4'-phosphopantetheine is transferred from CoA to a specific serine of apo-ACP, leading to the activated holo-ACP form.

It is found in the cytoplasm. It functions in the pathway siderophore biosynthesis; mycobactin biosynthesis. Functionally, acyl carrier protein involved in the formation of acyl-S-ACP intermediates within the mycobactin biosynthesis process. The aliphatic chains carried by ACP are subsequently transferred on to the mycobactin core by MbtK. This Mycobacterium bovis (strain ATCC BAA-935 / AF2122/97) protein is Acyl carrier protein MbtL (mbtL).